A 210-amino-acid chain; its full sequence is Pyridoxine/pyridoxamine 5'-phosphate oxidase (210 aa).

Substrate-binding positions include 7 to 10 (RQSY) and lysine 65. Residues 60 to 65 (RIVLIK), 75 to 76 (FT), arginine 81, lysine 82, and glutamine 104 contribute to the FMN site. Substrate contacts are provided by tyrosine 122, arginine 126, and serine 130. Residues 139-140 (QS) and tryptophan 182 each bind FMN. 188-190 (RLH) provides a ligand contact to substrate. Arginine 192 contributes to the FMN binding site.

It belongs to the pyridoxamine 5'-phosphate oxidase family. In terms of assembly, homodimer. The cofactor is FMN.

The enzyme catalyses pyridoxamine 5'-phosphate + O2 + H2O = pyridoxal 5'-phosphate + H2O2 + NH4(+). The catalysed reaction is pyridoxine 5'-phosphate + O2 = pyridoxal 5'-phosphate + H2O2. The protein operates within cofactor metabolism; pyridoxal 5'-phosphate salvage; pyridoxal 5'-phosphate from pyridoxamine 5'-phosphate: step 1/1. It functions in the pathway cofactor metabolism; pyridoxal 5'-phosphate salvage; pyridoxal 5'-phosphate from pyridoxine 5'-phosphate: step 1/1. Its function is as follows. Catalyzes the oxidation of either pyridoxine 5'-phosphate (PNP) or pyridoxamine 5'-phosphate (PMP) into pyridoxal 5'-phosphate (PLP). The protein is Pyridoxine/pyridoxamine 5'-phosphate oxidase of Bordetella bronchiseptica (strain ATCC BAA-588 / NCTC 13252 / RB50) (Alcaligenes bronchisepticus).